Reading from the N-terminus, the 531-residue chain is MADVLSVLRQYNIQKKEIVVKGDEVIFGEFSWPKNVKTNYVVWGTGKEGQPREYYTLDSILFLLNNVHLSHPVYVRRAATENIPVVRRPDRKDLLGYLNGEASTSASIDRSAPLEIGLQRSTQVKRAADEVLAEAKKPRIEDEECVRLDKERLAARLEGHKEGIVQTEQIRSLSEAMSVEKIAAIKAKIMAKKRSTIKTDLDDDITALKQRSFVDAEVDVTRDIVSRERVWRTRTTILQSTGKNFSKNIFAILQSVKAREEGRAPEQRPAPNAAPVDPTLRTKQPIPAAYNRYDQERFKGKEETEGFKIDTMGTYHGMTLKSVTEGASARKTQTPAAQPVPRPVSQARPPPNQKKGSRTPIIIIPAATTSLITMLNAKDLLQDLKFVPSDEKKKQGCQRENETLIQRRKDQMQPGGTAISVTVPYRVVDQPLKLMPQDWDRVVAVFVQGPAWQFKGWPWLLPDGSPVDIFAKIKAFHLKYDEVRLDPNVQKWDVTVLELSYHKRHLDRPVFLRFWETLDRYMVKHKSHLRF.

The residue at position 2 (A2) is an N-acetylalanine. The short motif at 125-139 (KRAADEVLAEAKKPR) is the Nuclear localization signal element. A Glycyl lysine isopeptide (Lys-Gly) (interchain with G-Cter in SUMO2) cross-link involves residue K198. The tract at residues 200 to 250 (DLDDDITALKQRSFVDAEVDVTRDIVSRERVWRTRTTILQSTGKNFSKNIF) is interaction with CTNNB1. The interval 200 to 531 (DLDDDITALK…MVKHKSHLRF (332 aa)) is interaction with POLR2A and PAF1. S212 is modified (phosphoserine). The interval 260–292 (EEGRAPEQRPAPNAAPVDPTLRTKQPIPAAYNR) is disordered. Residues K301, K308, and K321 each participate in a glycyl lysine isopeptide (Lys-Gly) (interchain with G-Cter in SUMO2) cross-link. Positions 325 to 358 (EGASARKTQTPAAQPVPRPVSQARPPPNQKKGSR) are disordered. Residues 338-352 (QPVPRPVSQARPPPN) show a composition bias toward pro residues.

Belongs to the CDC73 family. As to quaternary structure, component of the PAF1 complex, which consists of CDC73, PAF1, LEO1, CTR9, RTF1 and SKIC8. The PAF1 complex interacts with PHF5A. Within the PAF1 complex interacts directly with PHF5A. Interacts with POLR2A, CPSF1, CPSF4, CSTF2, KMT2A/MLL1 and CTNNB1. Interacts with a Set1-like complex that has histone methyltransferase activity and methylates histone H3. Found in a complex with BCL9L or BCL9, CDC73, CTNNB1 and PYGO1 indicative for the participation in a nuclear Wnt signaling complex. Interacts with PTPN11. Interacts with SETD5. Post-translationally, phosphorylated. Dephosphorylated by PTPN11. Found in the adrenal gland, kidney, heart, ovary and liver.

It localises to the nucleus. In terms of biological role, tumor suppressor probably involved in transcriptional and post-transcriptional control pathways. May be involved in cell cycle progression through the regulation of cyclin D1/PRAD1 expression. Component of the PAF1 complex (PAF1C) which has multiple functions during transcription by RNA polymerase II and is implicated in regulation of development and maintenance of embryonic stem cell pluripotency. PAF1C associates with RNA polymerase II through interaction with POLR2A CTD non-phosphorylated and 'Ser-2'- and 'Ser-5'-phosphorylated forms and is involved in transcriptional elongation, acting both independently and synergistically with TCEA1 and in cooperation with the DSIF complex and HTATSF1. PAF1C is required for transcription of Hox and Wnt target genes. PAF1C is involved in hematopoiesis and stimulates transcriptional activity of KMT2A/MLL1. PAF1C is involved in histone modifications such as ubiquitination of histone H2B and methylation on histone H3 'Lys-4' (H3K4me3). PAF1C recruits the RNF20/40 E3 ubiquitin-protein ligase complex and the E2 enzyme UBE2A or UBE2B to chromatin which mediate monoubiquitination of 'Lys-120' of histone H2B (H2BK120ub1); UB2A/B-mediated H2B ubiquitination is proposed to be coupled to transcription. PAF1C is involved in mRNA 3' end formation probably through association with cleavage and poly(A) factors. Connects PAF1C with the cleavage and polyadenylation specificity factor (CPSF) complex and the cleavage stimulation factor (CSTF) complex, and with Wnt signaling. Involved in polyadenylation of mRNA precursors. The protein is Parafibromin (Cdc73) of Mus musculus (Mouse).